The following is a 96-amino-acid chain: uncharacterized protein (96 aa).

Residue Asn-4 is glycosylated (N-linked (GlcNAc...) asparagine). The helical transmembrane segment at 59–81 (VFFTIFDTIITIIVRSGIPFPLL) threads the bilayer.

It is found in the membrane. This is an uncharacterized protein from Saccharomyces cerevisiae (strain ATCC 204508 / S288c) (Baker's yeast).